The primary structure comprises 293 residues: 2-pyrone-4,6-dicarboxylate hydrolase (293 aa).

The segment at 1 to 20 (MTNDERILSWNETPSKPRYT) is disordered. Substrate contacts are provided by residues 29-31 (HCH), Y47, S75, R122, R128, Y154, and H178. D246 functions as the Proton acceptor in the catalytic mechanism. Residue N251 participates in substrate binding.

Belongs to the metallo-dependent hydrolases superfamily. PDC hydrolase family. As to quaternary structure, monomer.

The catalysed reaction is 2-oxo-2H-pyran-4,6-dicarboxylate + H2O = (1E)-4-oxobut-1-ene-1,2,4-tricarboxylate + H(+). The protein operates within secondary metabolite metabolism; lignin degradation. With respect to regulation, strongly inhibited by 1 mM Zn(2+) ions. Also inhibited by pyridine-2,4-dicarboxylic acid, 5-hydroxyisophthalic acid and 5,5'-dithiobis(2-nitrobenzoic acid) (Ellman reagent). In terms of biological role, contributes to the degradation of lignin at the level of the protocatechuate 4,5-cleavage pathway. Catalyzes the hydrolysis of 2-pyrone-4,6-dicarboxylate (PDC) to (4E)-oxalomesaconate (OMA). The keto form of OMA can tautomerize into the enol form, 4-carboxy-2-hydroxymuconate (CHM), under certain pH conditions. Also catalyzes the reverse reaction. Is essential for the growth of Sphingobium sp. SYK-6 on vanillate but is not responsible for the growth of this strain on syringate. The chain is 2-pyrone-4,6-dicarboxylate hydrolase from Sphingobium sp. (strain NBRC 103272 / SYK-6).